A 439-amino-acid chain; its full sequence is Tol-Pal system protein TolB (439 aa).

A signal peptide spans 1-22 (MKKPLRWLAALTVLLLPLSALA).

It belongs to the TolB family. In terms of assembly, the Tol-Pal system is composed of five core proteins: the inner membrane proteins TolA, TolQ and TolR, the periplasmic protein TolB and the outer membrane protein Pal. They form a network linking the inner and outer membranes and the peptidoglycan layer.

Its subcellular location is the periplasm. Its function is as follows. Part of the Tol-Pal system, which plays a role in outer membrane invagination during cell division and is important for maintaining outer membrane integrity. This is Tol-Pal system protein TolB from Xanthomonas oryzae pv. oryzae (strain PXO99A).